The primary structure comprises 408 residues: uncharacterized protein (408 aa).

The chain crosses the membrane as a helical span at residues 56–76 (YWAGPAAASMVAAVTPYVAWL).

It belongs to the mycobacterial PPE family.

Its subcellular location is the cell membrane. This is an uncharacterized protein from Mycobacterium bovis (strain ATCC BAA-935 / AF2122/97).